We begin with the raw amino-acid sequence, 624 residues long: Probable Xaa-Pro aminopeptidase P (624 aa).

Positions 421, 432, 530, and 544 each coordinate Mn(2+).

This sequence belongs to the peptidase M24B family. Mn(2+) is required as a cofactor.

The catalysed reaction is Release of any N-terminal amino acid, including proline, that is linked to proline, even from a dipeptide or tripeptide.. Functionally, catalyzes the removal of a penultimate prolyl residue from the N-termini of peptides. The polypeptide is Probable Xaa-Pro aminopeptidase P (AMPP) (Arthroderma otae (strain ATCC MYA-4605 / CBS 113480) (Microsporum canis)).